Here is a 23-residue protein sequence, read N- to C-terminus: Dermaseptin III-like peptide (23 aa).

In terms of tissue distribution, expressed by the skin glands.

It is found in the secreted. Its function is as follows. Possesses a potent antimicrobial activity against bacteria, fungi and protozoa. Probably acts by disturbing membrane functions with its amphipathic structure. This chain is Dermaseptin III-like peptide, found in Phyllomedusa burmeisteri (Brazilian common walking leaf frog).